We begin with the raw amino-acid sequence, 132 residues long: Large-conductance mechanosensitive channel (132 aa).

3 helical membrane-spanning segments follow: residues 14 to 34 (VVDL…VSSL), 38 to 58 (IITP…LHFG), and 67 to 87 (GNFI…FMFV).

It belongs to the MscL family. Homopentamer.

The protein resides in the cell membrane. Functionally, channel that opens in response to stretch forces in the membrane lipid bilayer. May participate in the regulation of osmotic pressure changes within the cell. This chain is Large-conductance mechanosensitive channel, found in Bacillus cereus (strain ATCC 10987 / NRS 248).